The chain runs to 375 residues: MSDDPEDRMLGWDESVFRDEHVFEIDWLPETFKHRDTQMETLKYALRPAVRGSRPLNVIARGPPGTGKTTAVQILFDELTAQTDVKTVRVNCQMDSTRYAVFSRLFAEIFDYEPPSSGISFKKLFSQITDKLVEEDEVLVVALDDVNYLFYESEASDTLYSLLRAHEAHSGAKIGVICVSSDLELDTIDALDTRVQSVFRPEEVYFNPYGQAEIADILGERADRGFNEGVVGPTVLDRVAELTEEQGGDLRVGIDLLRRAGMNAEMRASRSVETEDVEAAYDKSKYVHLSRRLRELSDSETALVEVIAAHDGQQAGDIYDAFSEQTDLGYTRYSEIINKLDQLDIIDADYTNVEGRGRSRELTLNYDADAVLERL.

ATP-binding positions include T66 to T70, Y209, and R221.

This sequence belongs to the CDC6/cdc18 family.

Functionally, involved in regulation of DNA replication. This chain is ORC1-type DNA replication protein 3 (cdc6c), found in Haloarcula marismortui (strain ATCC 43049 / DSM 3752 / JCM 8966 / VKM B-1809) (Halobacterium marismortui).